We begin with the raw amino-acid sequence, 1134 residues long: Nck-associated protein 1-like (1134 aa).

A disordered region spans residues 638 to 671 (KAKNKKSMKQRQAPRKGEPERDKPGAESHRKNRS). Residues 639-651 (AKNKKSMKQRQAP) show a composition bias toward basic residues. Residues 652–666 (RKGEPERDKPGAESH) show a composition bias toward basic and acidic residues. A helical transmembrane segment spans residues 999 to 1019 (LLLIFLAVSLPLLATDPSSFF).

In terms of assembly, in hematopoietic cells, component of the WAVE2 complex composed of ABI1, CYFIP1/SRA1, NCKAP1L/HEM1 and WASF2/WAVE2. Interacts with ARHGAP4, PIK3C3/VPS34 and PPP1R12A/MYPT1. Interacts with mammalian target of rapamycin complex 2 (mTORC2) components, including MTOR and RICTOR. Predominantly expressed in developing and mature hematopoietic cells. Also detected in urogenital tissues, including testis.

The protein resides in the membrane. Its subcellular location is the cytoplasm. In terms of biological role, essential hematopoietic-specific regulator of the actin cytoskeleton. Controls lymphocyte development, activation, proliferation and homeostasis, erythrocyte membrane stability, as well as phagocytosis and migration by neutrophils and macrophages. Component of the WAVE2 complex which signals downstream of RAC to stimulate F-actin polymerization. Required for stabilization and/or translation of the WAVE2 complex proteins in hematopoietic cells. Within the WAVE2 complex, enables the cortical actin network to restrain excessive degranulation and granule release by T-cells. Required for efficient T-lymphocyte and neutrophil migration. Exhibits complex cycles of activation and inhibition to generate waves of propagating the assembly with actin. Also involved in mechanisms WAVE independent to regulate myosin and actin polymerization during neutrophil chemotaxis. In T-cells, required for proper mechanistic target of rapamycin complex 2 (mTORC2)-dependent AKT phosphorylation, cell proliferation and cytokine secretion, including that of IL2 and TNF. In Mus musculus (Mouse), this protein is Nck-associated protein 1-like.